The sequence spans 474 residues: Glutamyl-tRNA(Gln) amidotransferase subunit A (474 aa).

Active-site charge relay system residues include Lys-76 and Ser-151. Ser-175 (acyl-ester intermediate) is an active-site residue.

The protein belongs to the amidase family. GatA subfamily. As to quaternary structure, heterotrimer of A, B and C subunits.

It carries out the reaction L-glutamyl-tRNA(Gln) + L-glutamine + ATP + H2O = L-glutaminyl-tRNA(Gln) + L-glutamate + ADP + phosphate + H(+). In terms of biological role, allows the formation of correctly charged Gln-tRNA(Gln) through the transamidation of misacylated Glu-tRNA(Gln) in organisms which lack glutaminyl-tRNA synthetase. The reaction takes place in the presence of glutamine and ATP through an activated gamma-phospho-Glu-tRNA(Gln). In Chlorobium limicola (strain DSM 245 / NBRC 103803 / 6330), this protein is Glutamyl-tRNA(Gln) amidotransferase subunit A.